The primary structure comprises 565 residues: Heme/hemopexin transporter protein HuxB (565 aa).

The signal sequence occupies residues 1–26 (MKMRPRYSVIASAVSLGFVLSKSVMA). The region spanning 73 to 150 (FPLTQVQILD…GTVKILLLKG (78 aa)) is the POTRA domain.

This sequence belongs to the TPS (TC 1.B.20) family.

It localises to the cell outer membrane. In terms of biological role, likely functions in the release of soluble HxuA from the cell. Its function is as follows. Probable member of a two partner secretion pathway (TPS) in which it mediates the secretion of HuxA. This chain is Heme/hemopexin transporter protein HuxB (hxuB), found in Haemophilus influenzae (strain 86-028NP).